Consider the following 99-residue polypeptide: Malonate decarboxylase acyl carrier protein (99 aa).

Position 25 is an O-(phosphoribosyl dephospho-coenzyme A)serine (Ser-25).

Belongs to the MdcC family. Post-translationally, covalently binds the prosthetic group of malonate decarboxylase.

It localises to the cytoplasm. Subunit of malonate decarboxylase, it is an acyl carrier protein to which acetyl and malonyl thioester residues are bound via a 2'-(5''-phosphoribosyl)-3'-dephospho-CoA prosthetic group and turn over during the catalytic mechanism. This chain is Malonate decarboxylase acyl carrier protein, found in Pseudomonas savastanoi pv. phaseolicola (strain 1448A / Race 6) (Pseudomonas syringae pv. phaseolicola (strain 1448A / Race 6)).